Reading from the N-terminus, the 152-residue chain is Peptide deformylase (152 aa).

Fe cation contacts are provided by cysteine 88 and histidine 130. Glutamate 131 is an active-site residue. Histidine 134 lines the Fe cation pocket.

The protein belongs to the polypeptide deformylase family. Fe(2+) is required as a cofactor.

It carries out the reaction N-terminal N-formyl-L-methionyl-[peptide] + H2O = N-terminal L-methionyl-[peptide] + formate. Functionally, removes the formyl group from the N-terminal Met of newly synthesized proteins. Requires at least a dipeptide for an efficient rate of reaction. N-terminal L-methionine is a prerequisite for activity but the enzyme has broad specificity at other positions. The polypeptide is Peptide deformylase (Syntrophomonas wolfei subsp. wolfei (strain DSM 2245B / Goettingen)).